The primary structure comprises 274 residues: 2,3,4,5-tetrahydropyridine-2,6-dicarboxylate N-succinyltransferase (274 aa).

Belongs to the transferase hexapeptide repeat family.

The protein localises to the cytoplasm. It catalyses the reaction (S)-2,3,4,5-tetrahydrodipicolinate + succinyl-CoA + H2O = (S)-2-succinylamino-6-oxoheptanedioate + CoA. Its pathway is amino-acid biosynthesis; L-lysine biosynthesis via DAP pathway; LL-2,6-diaminopimelate from (S)-tetrahydrodipicolinate (succinylase route): step 1/3. This chain is 2,3,4,5-tetrahydropyridine-2,6-dicarboxylate N-succinyltransferase, found in Erwinia tasmaniensis (strain DSM 17950 / CFBP 7177 / CIP 109463 / NCPPB 4357 / Et1/99).